The following is a 913-amino-acid chain: Protein translocase subunit SecA (913 aa).

Residues glutamine 87, 105-109 (GEGKT), and aspartate 512 each bind ATP. Positions 864 to 913 (LDQPEEEPAEVEGQPDVAVASVRTEPKIGRNEPCPCGSGKKYKHCHGQVQ) are disordered. Zn(2+) is bound by residues cysteine 897, cysteine 899, cysteine 908, and histidine 909. Residues 903 to 913 (KKYKHCHGQVQ) are compositionally biased toward basic residues.

The protein belongs to the SecA family. As to quaternary structure, monomer and homodimer. Part of the essential Sec protein translocation apparatus which comprises SecA, SecYEG and auxiliary proteins SecDF-YajC and YidC. The cofactor is Zn(2+).

It is found in the cell inner membrane. The protein resides in the cytoplasm. It catalyses the reaction ATP + H2O + cellular proteinSide 1 = ADP + phosphate + cellular proteinSide 2.. Functionally, part of the Sec protein translocase complex. Interacts with the SecYEG preprotein conducting channel. Has a central role in coupling the hydrolysis of ATP to the transfer of proteins into and across the cell membrane, serving both as a receptor for the preprotein-SecB complex and as an ATP-driven molecular motor driving the stepwise translocation of polypeptide chains across the membrane. This Stutzerimonas stutzeri (strain A1501) (Pseudomonas stutzeri) protein is Protein translocase subunit SecA.